A 176-amino-acid polypeptide reads, in one-letter code: Ribosome maturation factor RimM (176 aa).

A PRC barrel domain is found at 97 to 176; sequence GDEFYWRELV…TIQVDWDPSF (80 aa).

Belongs to the RimM family. In terms of assembly, binds ribosomal protein uS19.

The protein resides in the cytoplasm. Functionally, an accessory protein needed during the final step in the assembly of 30S ribosomal subunit, possibly for assembly of the head region. Essential for efficient processing of 16S rRNA. May be needed both before and after RbfA during the maturation of 16S rRNA. It has affinity for free ribosomal 30S subunits but not for 70S ribosomes. In Pseudoalteromonas atlantica (strain T6c / ATCC BAA-1087), this protein is Ribosome maturation factor RimM.